The chain runs to 339 residues: Uricase (339 aa).

Residues Lys-33 and Thr-78 each act as charge relay system in the active site. Residues Thr-78, Asp-79, Phe-201, Arg-218, Val-266, Gln-267, and Asn-293 each coordinate urate. His-295 functions as the Charge relay system in the catalytic mechanism. Residues 337–339 carry the Microbody targeting signal motif; sequence SHL.

The protein belongs to the uricase family.

It localises to the peroxisome. The catalysed reaction is urate + O2 + H2O = 5-hydroxyisourate + H2O2. It participates in purine metabolism; urate degradation; (S)-allantoin from urate: step 1/3. Its function is as follows. Catalyzes the oxidation of uric acid to 5-hydroxyisourate, which is further processed to form (S)-allantoin. This Drosophila subobscura (Fruit fly) protein is Uricase (Uro).